Consider the following 64-residue polypeptide: Large ribosomal subunit protein bL28 (64 aa).

This sequence belongs to the bacterial ribosomal protein bL28 family.

The polypeptide is Large ribosomal subunit protein bL28 (Campylobacter jejuni subsp. doylei (strain ATCC BAA-1458 / RM4099 / 269.97)).